Here is a 481-residue protein sequence, read N- to C-terminus: Ankyrin repeat, SAM and basic leucine zipper domain-containing protein 1 (481 aa).

The segment covering 1-10 (MASGALRGLA) has biased composition (low complexity). The segment at 1–23 (MASGALRGLAVAGGGESSDSEDD) is disordered. Phosphoserine occurs at positions 17, 18, and 20. 6 ANK repeats span residues 45-74 (EKSETFKKALTTGDISLVQELLDSGISVDS), 78-107 (YGWTPLMYAASIANVELVRVLLNRGANASF), 110-144 (DKQTILITACSARGSEEQILKCVELLLSRNADPNI), 148-177 (RLMTPIMYAARDGHPQVVALLVAHGAEVNA), 181-210 (NGYTALTWAARQGHKNVVLKLLELGANKML), and 214-243 (DGKIPSEIAKRNKHLEIFNFLSLTLNPLEG). An SAM domain is found at 272 to 334 (SYTAFGDLEI…KILSALKELE (63 aa)).

As to quaternary structure, interacts with DDX4, PIWIL1, RANBP9 and TDRD1.

The protein localises to the cytoplasm. In terms of biological role, plays a central role during spermatogenesis by repressing transposable elements and preventing their mobilization, which is essential for the germline integrity. Acts via the piRNA metabolic process, which mediates the repression of transposable elements during meiosis by forming complexes composed of piRNAs and Piwi proteins and governs the methylation and subsequent repression of transposons. Its association with pi-bodies suggests a participation in the primary piRNAs metabolic process. Required prior to the pachytene stage to facilitate the production of multiple types of piRNAs, including those associated with repeats involved in the regulation of retrotransposons. May act by mediating protein-protein interactions during germ cell maturation. The chain is Ankyrin repeat, SAM and basic leucine zipper domain-containing protein 1 (ASZ1) from Eulemur macaco macaco (Black lemur).